We begin with the raw amino-acid sequence, 407 residues long: Na(+)-translocating NADH-quinone reductase subunit F (407 aa).

Residues 3 to 23 (ITLGIAMFTVIVLALAVLILF) form a helical membrane-spanning segment. The 2Fe-2S ferredoxin-type domain occupies 32 to 126 (GDITIEINDD…SMKIELPEEV (95 aa)). The [2Fe-2S] cluster site is built by cysteine 69, cysteine 75, cysteine 78, and cysteine 110. Residues 129–269 (VKKWECTVIS…SGPFGEFFAK (141 aa)) form the FAD-binding FR-type domain.

It belongs to the NqrF family. Composed of six subunits; NqrA, NqrB, NqrC, NqrD, NqrE and NqrF. Requires [2Fe-2S] cluster as cofactor. It depends on FAD as a cofactor.

The protein resides in the cell inner membrane. The enzyme catalyses a ubiquinone + n Na(+)(in) + NADH + H(+) = a ubiquinol + n Na(+)(out) + NAD(+). In terms of biological role, NQR complex catalyzes the reduction of ubiquinone-1 to ubiquinol by two successive reactions, coupled with the transport of Na(+) ions from the cytoplasm to the periplasm. The first step is catalyzed by NqrF, which accepts electrons from NADH and reduces ubiquinone-1 to ubisemiquinone by a one-electron transfer pathway. The protein is Na(+)-translocating NADH-quinone reductase subunit F of Histophilus somni (strain 129Pt) (Haemophilus somnus).